The sequence spans 473 residues: Photosystem II CP43 reaction center protein (473 aa).

A propeptide spanning residues 1-14 is cleaved from the precursor; sequence MKTLYSLRRFYHVE. The residue at position 15 (T15) is an N-acetylthreonine. T15 is modified (phosphothreonine). Helical transmembrane passes span 69 to 93, 134 to 155, 178 to 200, 255 to 275, and 291 to 312; these read LFEV…PHLA, LLGP…KDRN, KALY…RKIT, KPFA…LSYS, and WFNN…ASQA. Residue E367 coordinates [CaMn4O5] cluster. A helical transmembrane segment spans residues 447-471; sequence RARAAAAGFEKGIDRDFEPVLSMTP.

This sequence belongs to the PsbB/PsbC family. PsbC subfamily. In terms of assembly, PSII is composed of 1 copy each of membrane proteins PsbA, PsbB, PsbC, PsbD, PsbE, PsbF, PsbH, PsbI, PsbJ, PsbK, PsbL, PsbM, PsbT, PsbX, PsbY, PsbZ, Psb30/Ycf12, at least 3 peripheral proteins of the oxygen-evolving complex and a large number of cofactors. It forms dimeric complexes. The cofactor is Binds multiple chlorophylls and provides some of the ligands for the Ca-4Mn-5O cluster of the oxygen-evolving complex. It may also provide a ligand for a Cl- that is required for oxygen evolution. PSII binds additional chlorophylls, carotenoids and specific lipids..

It is found in the plastid. Its subcellular location is the chloroplast thylakoid membrane. Functionally, one of the components of the core complex of photosystem II (PSII). It binds chlorophyll and helps catalyze the primary light-induced photochemical processes of PSII. PSII is a light-driven water:plastoquinone oxidoreductase, using light energy to abstract electrons from H(2)O, generating O(2) and a proton gradient subsequently used for ATP formation. The protein is Photosystem II CP43 reaction center protein of Coffea arabica (Arabian coffee).